The following is a 351-amino-acid chain: S-adenosylmethionine:tRNA ribosyltransferase-isomerase (351 aa).

It belongs to the QueA family. Monomer.

It is found in the cytoplasm. The enzyme catalyses 7-aminomethyl-7-carbaguanosine(34) in tRNA + S-adenosyl-L-methionine = epoxyqueuosine(34) in tRNA + adenine + L-methionine + 2 H(+). It participates in tRNA modification; tRNA-queuosine biosynthesis. Its function is as follows. Transfers and isomerizes the ribose moiety from AdoMet to the 7-aminomethyl group of 7-deazaguanine (preQ1-tRNA) to give epoxyqueuosine (oQ-tRNA). This is S-adenosylmethionine:tRNA ribosyltransferase-isomerase from Photobacterium profundum (strain SS9).